Here is a 371-residue protein sequence, read N- to C-terminus: Histidinol-phosphate aminotransferase (371 aa).

K221 carries the N6-(pyridoxal phosphate)lysine modification.

The protein belongs to the class-II pyridoxal-phosphate-dependent aminotransferase family. Histidinol-phosphate aminotransferase subfamily. In terms of assembly, homodimer. The cofactor is pyridoxal 5'-phosphate.

It carries out the reaction L-histidinol phosphate + 2-oxoglutarate = 3-(imidazol-4-yl)-2-oxopropyl phosphate + L-glutamate. The protein operates within amino-acid biosynthesis; L-histidine biosynthesis; L-histidine from 5-phospho-alpha-D-ribose 1-diphosphate: step 7/9. The protein is Histidinol-phosphate aminotransferase of Pseudoalteromonas atlantica (strain T6c / ATCC BAA-1087).